The following is a 1216-amino-acid chain: Tyrosine-protein kinase receptor ver-4 (1216 aa).

Over 1–789 (MRVSLTEFLV…VKVAGASSSS (789 aa)) the chain is Extracellular. 16 N-linked (GlcNAc...) asparagine glycosylation sites follow: Asn-142, Asn-195, Asn-206, Asn-245, Asn-283, Asn-333, Asn-348, Asn-384, Asn-402, Asn-412, Asn-496, Asn-508, Asn-588, Asn-599, Asn-664, and Asn-703. Ig-like C2-type domains are found at residues 596–691 (KSVN…TSIS) and 697–783 (PPFL…VKVA). A disulfide bridge connects residues Cys-619 and Cys-675. Cys-721 and Cys-765 are oxidised to a cystine. A helical membrane pass occupies residues 790 to 810 (FFWLFITFFAFVVVGIVVSLL). Residues 811–1216 (WKLFGQKDLK…WVQKPTQLFF (406 aa)) are Cytoplasmic-facing. In terms of domain architecture, Protein kinase spans 870–1181 (LEILETLGSG…IKLFKNHIQY (312 aa)). ATP-binding positions include 876 to 884 (LGSGQFGIV) and Lys-908. Asp-1042 (proton acceptor) is an active-site residue.

This sequence belongs to the protein kinase superfamily. Tyr protein kinase family.

It is found in the cell membrane. It carries out the reaction L-tyrosyl-[protein] + ATP = O-phospho-L-tyrosyl-[protein] + ADP + H(+). In terms of biological role, receptor tyrosine kinase which may be involved, downstream of pvf-1, in the positioning of ray 1, the most anterior ray sensillum in the male tail. The sequence is that of Tyrosine-protein kinase receptor ver-4 from Caenorhabditis elegans.